Consider the following 268-residue polypeptide: Helix-loop-helix protein 6 (268 aa).

A compositionally biased stretch (low complexity) spans 117–130 (QSQVQPQLPTQSQP). The tract at residues 117–140 (QSQVQPQLPTQSQPKPSSKASLDT) is disordered. Residues 131 to 140 (KPSSKASLDT) are compositionally biased toward polar residues. Positions 173–225 (SSVWKRNERERCRVRNVNDGYERLRKHLPVHFDEKRISKVDTLRLAIRYIKHL) constitute a bHLH domain.

As to expression, expressed in the gland cells of the pharynx and weakly in the pharyngeal neuron.

Its subcellular location is the nucleus. In terms of biological role, transcription factor that regulates the development of the g2 pharyngeal gland cells and pharyngeal gland function and thereby is required for feeding. Required for the expression of a number of genes in the pharyngeal gland, possibly by binding to the E box motif (5'-CANNTG-3') in the promoter region of these genes. Positively regulates the expression of genes encoding mucin-like proteins, which lubricate the pharyngeal tract to ensure efficient passage of the bacterial food source. Exhibits pharyngeal gland-specific positive autoregulation activity. This chain is Helix-loop-helix protein 6 (hlh-6), found in Caenorhabditis elegans.